The sequence spans 343 residues: Heat-inducible transcription repressor HrcA (343 aa).

The protein belongs to the HrcA family.

Negative regulator of class I heat shock genes (grpE-dnaK-dnaJ and groELS operons). Prevents heat-shock induction of these operons. The sequence is that of Heat-inducible transcription repressor HrcA from Caldanaerobacter subterraneus subsp. tengcongensis (strain DSM 15242 / JCM 11007 / NBRC 100824 / MB4) (Thermoanaerobacter tengcongensis).